We begin with the raw amino-acid sequence, 764 residues long: 5-methyltetrahydropteroyltriglutamate--homocysteine methyltransferase (764 aa).

Residues 16 to 19 and Lys115 each bind 5-methyltetrahydropteroyltri-L-glutamate; that span reads RELK. L-homocysteine contacts are provided by residues 435–437 and Glu488; that span reads IGS. Residues 435-437 and Glu488 each bind L-methionine; that span reads IGS. Residues 519–520 and Trp565 each bind 5-methyltetrahydropteroyltri-L-glutamate; that span reads RC. Asp603 is an L-homocysteine binding site. L-methionine is bound at residue Asp603. Glu609 is a 5-methyltetrahydropteroyltri-L-glutamate binding site. Zn(2+) contacts are provided by His645, Cys647, and Glu669. The Proton donor role is filled by His698. Cys730 provides a ligand contact to Zn(2+).

This sequence belongs to the vitamin-B12 independent methionine synthase family. Requires Zn(2+) as cofactor.

It carries out the reaction 5-methyltetrahydropteroyltri-L-glutamate + L-homocysteine = tetrahydropteroyltri-L-glutamate + L-methionine. It functions in the pathway amino-acid biosynthesis; L-methionine biosynthesis via de novo pathway; L-methionine from L-homocysteine (MetE route): step 1/1. Its function is as follows. Catalyzes the transfer of a methyl group from 5-methyltetrahydrofolate to homocysteine resulting in methionine formation. This chain is 5-methyltetrahydropteroyltriglutamate--homocysteine methyltransferase, found in Burkholderia pseudomallei (strain K96243).